Here is a 29-residue protein sequence, read N- to C-terminus: GWTLNSAGYLLGPHAIDNHRSFHDKHGLA.

The residue at position 29 (A29) is an Alanine amide.

It belongs to the galanin family.

It is found in the secreted. In terms of biological role, contracts smooth muscle of the gastrointestinal and genitourinary tract, regulates growth hormone release, modulates insulin release, and may be involved in the control of adrenal secretion. The sequence is that of Galanin (GAL) from Ovis aries (Sheep).